The sequence spans 717 residues: ATP-dependent RNA helicase homolog DQX1 (717 aa).

Residues glutamine 57–proline 225 form the Helicase ATP-binding domain. Glycine 70–serine 77 contacts ATP. Residues aspartate 170 to glutamine 173 carry the DEAQ box motif. In terms of domain architecture, Helicase C-terminal spans alanine 248–aspartate 447. The segment at glycine 694 to glutamine 717 is disordered. The span at threonine 699–glutamine 708 shows a compositional bias: polar residues.

The protein localises to the nucleus. Its function is as follows. Might be involved in RNA metabolism; it is missing helicase motif III and may not have helicase activity. The protein is ATP-dependent RNA helicase homolog DQX1 (DQX1) of Homo sapiens (Human).